Consider the following 305-residue polypeptide: Ribosomal RNA small subunit methyltransferase H (305 aa).

Residues 33–35, Asp-51, Phe-82, Asp-96, and Gln-103 contribute to the S-adenosyl-L-methionine site; that span reads GGY.

This sequence belongs to the methyltransferase superfamily. RsmH family.

The protein localises to the cytoplasm. It carries out the reaction cytidine(1402) in 16S rRNA + S-adenosyl-L-methionine = N(4)-methylcytidine(1402) in 16S rRNA + S-adenosyl-L-homocysteine + H(+). Functionally, specifically methylates the N4 position of cytidine in position 1402 (C1402) of 16S rRNA. The chain is Ribosomal RNA small subunit methyltransferase H from Rickettsia bellii (strain OSU 85-389).